An 860-amino-acid polypeptide reads, in one-letter code: Leucine--tRNA ligase (860 aa).

Residues 42-52 (PYPSGRLHMGH) carry the 'HIGH' region motif. Residues 619–623 (KMSKS) carry the 'KMSKS' region motif. Lys622 contacts ATP.

It belongs to the class-I aminoacyl-tRNA synthetase family.

Its subcellular location is the cytoplasm. It carries out the reaction tRNA(Leu) + L-leucine + ATP = L-leucyl-tRNA(Leu) + AMP + diphosphate. This Pectobacterium carotovorum subsp. carotovorum (strain PC1) protein is Leucine--tRNA ligase.